The following is a 180-amino-acid chain: Bifunctional protein PyrR (180 aa).

The PRPP-binding motif lies at 101-113 (VILIDDVLFTGRT).

This sequence belongs to the purine/pyrimidine phosphoribosyltransferase family. PyrR subfamily. In terms of assembly, homodimer and homohexamer; in equilibrium.

It carries out the reaction UMP + diphosphate = 5-phospho-alpha-D-ribose 1-diphosphate + uracil. Functionally, regulates transcriptional attenuation of the pyrimidine nucleotide (pyr) operon by binding in a uridine-dependent manner to specific sites on pyr mRNA. This disrupts an antiterminator hairpin in the RNA and favors formation of a downstream transcription terminator, leading to a reduced expression of downstream genes. In terms of biological role, also displays a weak uracil phosphoribosyltransferase activity which is not physiologically significant. The chain is Bifunctional protein PyrR from Oceanobacillus iheyensis (strain DSM 14371 / CIP 107618 / JCM 11309 / KCTC 3954 / HTE831).